We begin with the raw amino-acid sequence, 171 residues long: Protein BTG1 (171 aa).

Residue Ser159 is modified to Phosphoserine.

This sequence belongs to the BTG family. As to quaternary structure, interacts with CNOT7 and CNOT8.

In terms of biological role, anti-proliferative protein. The sequence is that of Protein BTG1 (BTG1) from Bos taurus (Bovine).